Consider the following 321-residue polypeptide: tRNA U34 carboxymethyltransferase (321 aa).

Carboxy-S-adenosyl-L-methionine-binding positions include Lys-90, Trp-104, Lys-109, Gly-129, 151 to 153, 180 to 181, Met-195, Tyr-199, and Arg-314; these read DPT and IE.

It belongs to the class I-like SAM-binding methyltransferase superfamily. CmoB family. In terms of assembly, homotetramer.

It catalyses the reaction carboxy-S-adenosyl-L-methionine + 5-hydroxyuridine(34) in tRNA = 5-carboxymethoxyuridine(34) in tRNA + S-adenosyl-L-homocysteine + H(+). Functionally, catalyzes carboxymethyl transfer from carboxy-S-adenosyl-L-methionine (Cx-SAM) to 5-hydroxyuridine (ho5U) to form 5-carboxymethoxyuridine (cmo5U) at position 34 in tRNAs. The chain is tRNA U34 carboxymethyltransferase from Histophilus somni (strain 2336) (Haemophilus somnus).